The primary structure comprises 634 residues: Probable potassium transport system protein Kup (634 aa).

12 consecutive transmembrane segments (helical) span residues leucine 21–leucine 41, valine 58–valine 78, methionine 110–isoleucine 130, proline 152–glycine 172, alanine 179–methionine 199, tryptophan 223–tyrosine 243, tryptophan 258–leucine 278, alanine 296–isoleucine 316, isoleucine 348–phenylalanine 368, alanine 377–alanine 397, valine 403–phenylalanine 423, and isoleucine 427–leucine 447.

The protein belongs to the HAK/KUP transporter (TC 2.A.72) family.

The protein localises to the cell inner membrane. The catalysed reaction is K(+)(in) + H(+)(in) = K(+)(out) + H(+)(out). Transport of potassium into the cell. Likely operates as a K(+):H(+) symporter. This chain is Probable potassium transport system protein Kup, found in Xanthomonas euvesicatoria pv. vesicatoria (strain 85-10) (Xanthomonas campestris pv. vesicatoria).